The chain runs to 119 residues: uncharacterized protein (119 aa).

A helical transmembrane segment spans residues 30-50; it reads LMTLPCVLFLSSFGQAVIVVL.

It localises to the membrane. This is an uncharacterized protein from Saccharomyces cerevisiae (strain ATCC 204508 / S288c) (Baker's yeast).